The chain runs to 235 residues: MDFIAGEILYFNKPLTWTSFDLVNKFRYKLSRKLKVKKIKVGHAGTLDPLATGVMIVCTGRATKRIDEFQYQTKEYIATLKLGETTPSFDLEKEIDAVYPTEHITRELVEEVLKTFVGTIQQIPPVFSACKVEGKRAYELARKGEEVELKSKTLVIDELELLECDLPVIKIRVVCSKGTYIRALARDIGKALGSGAHLIGLERTRIGEVTLDMCMSPEEIDDFLEQNVVKIEEEK.

The Nucleophile role is filled by D48.

Belongs to the pseudouridine synthase TruB family. Type 1 subfamily.

It carries out the reaction uridine(55) in tRNA = pseudouridine(55) in tRNA. Responsible for synthesis of pseudouridine from uracil-55 in the psi GC loop of transfer RNAs. This Parabacteroides distasonis (strain ATCC 8503 / DSM 20701 / CIP 104284 / JCM 5825 / NCTC 11152) protein is tRNA pseudouridine synthase B.